Here is a 178-residue protein sequence, read N- to C-terminus: PEST proteolytic signal-containing nuclear protein (178 aa).

Basic and acidic residues predominate over residues 1–15 (MADGKAGEEKPEKSQ). The interval 1–84 (MADGKAGEEK…IGSQTTKKAS (84 aa)) is disordered. The residue at position 2 (Ala-2) is an N-acetylalanine. A compositionally biased stretch (low complexity) spans 37 to 47 (SSSNGGESSSR). Position 53 is a phosphoserine (Ser-53). Lys-64 is modified (N6-acetyllysine). 3 positions are modified to phosphoserine: Ser-77, Ser-87, and Ser-119. The segment at 134–178 (NIGRDTPTSAGPNSFNKGKHGFSDNQKLWERNIKSHLGNVHDQDN) is disordered. A Phosphothreonine modification is found at Thr-139. A compositionally biased stretch (polar residues) spans 139–149 (TPTSAGPNSFN). Ser-147 carries the phosphoserine modification. An N6-acetyllysine mark is found at Lys-150 and Lys-152. The span at 160-178 (KLWERNIKSHLGNVHDQDN) shows a compositional bias: basic and acidic residues.

Interacts with UHRF2/NIRF. In terms of processing, ubiquitinated; mediated by UHRF2 and leading to its subsequent proteasomal degradation. N-terminally acetylated in a HYPK-dependent manner by the NatA acetyltransferase complex which is composed of NAA10 and NAA15.

It is found in the nucleus. May be involved in cell cycle regulation. The sequence is that of PEST proteolytic signal-containing nuclear protein (PCNP) from Pongo abelii (Sumatran orangutan).